A 129-amino-acid polypeptide reads, in one-letter code: Ribonuclease P protein component (129 aa).

It belongs to the RnpA family. In terms of assembly, consists of a catalytic RNA component (M1 or rnpB) and a protein subunit.

The enzyme catalyses Endonucleolytic cleavage of RNA, removing 5'-extranucleotides from tRNA precursor.. RNaseP catalyzes the removal of the 5'-leader sequence from pre-tRNA to produce the mature 5'-terminus. It can also cleave other RNA substrates such as 4.5S RNA. The protein component plays an auxiliary but essential role in vivo by binding to the 5'-leader sequence and broadening the substrate specificity of the ribozyme. In Prochlorococcus marinus (strain MIT 9515), this protein is Ribonuclease P protein component.